We begin with the raw amino-acid sequence, 101 residues long: Anti-lipopolysaccharide factor (101 aa).

An intrachain disulfide couples C31 to C52.

Its function is as follows. Binds tightly to LPS and thus specifically inhibits the LPS-mediated activation of the hemolymph coagulation. It has a strong antibacterial effect especially on the growth of Gram-negative bacteria. The polypeptide is Anti-lipopolysaccharide factor (Limulus polyphemus (Atlantic horseshoe crab)).